The chain runs to 493 residues: Cobyric acid synthase (493 aa).

The region spanning 246–440 is the GATase cobBQ-type domain; the sequence is PIDIAVIKMP…IHGVFDGIVF (195 aa). Catalysis depends on Cys326, which acts as the Nucleophile. His432 is a catalytic residue.

It belongs to the CobB/CobQ family. CobQ subfamily.

It functions in the pathway cofactor biosynthesis; adenosylcobalamin biosynthesis. Catalyzes amidations at positions B, D, E, and G on adenosylcobyrinic A,C-diamide. NH(2) groups are provided by glutamine, and one molecule of ATP is hydrogenolyzed for each amidation. The sequence is that of Cobyric acid synthase from Clostridium botulinum (strain 657 / Type Ba4).